We begin with the raw amino-acid sequence, 147 residues long: Peptide deformylase (147 aa).

The Fe cation site is built by Cys-88 and His-130. Glu-131 is a catalytic residue. His-134 serves as a coordination point for Fe cation.

Belongs to the polypeptide deformylase family. Fe(2+) serves as cofactor.

The enzyme catalyses N-terminal N-formyl-L-methionyl-[peptide] + H2O = N-terminal L-methionyl-[peptide] + formate. In terms of biological role, removes the formyl group from the N-terminal Met of newly synthesized proteins. Requires at least a dipeptide for an efficient rate of reaction. N-terminal L-methionine is a prerequisite for activity but the enzyme has broad specificity at other positions. This Clostridium botulinum (strain Alaska E43 / Type E3) protein is Peptide deformylase.